Consider the following 335-residue polypeptide: Putative serine/threonine-protein kinase 040L (335 aa).

Residues 33 to 329 (YYYQEFHDEG…DRLTELHHHL (297 aa)) enclose the Protein kinase domain. ATP is bound by residues 39–47 (HDEGGYGSI) and lysine 62. Aspartate 196 serves as the catalytic Proton acceptor.

The protein belongs to the protein kinase superfamily. Ser/Thr protein kinase family.

The sequence is that of Putative serine/threonine-protein kinase 040L from Invertebrate iridescent virus 3 (IIV-3).